Here is a 178-residue protein sequence, read N- to C-terminus: Heavy metal-associated isoprenylated plant protein 30 (178 aa).

One can recognise an HMA domain in the interval 45-108 (LQTIDLKVRM…AVRRAGKRAE (64 aa)). A metal cation contacts are provided by C56 and C59. C175 bears the Cysteine methyl ester mark. C175 carries the S-farnesyl cysteine lipid modification. Positions 176 to 178 (SLM) are cleaved as a propeptide — removed in mature form.

This sequence belongs to the HIPP family. In terms of assembly, interacts with ZHD3/HB21, ZHD11/HB29 and ZHD8/HB30.

Functionally, heavy-metal-binding protein. The polypeptide is Heavy metal-associated isoprenylated plant protein 30 (Arabidopsis thaliana (Mouse-ear cress)).